Reading from the N-terminus, the 99-residue chain is Small integral membrane protein 14 (99 aa).

At 1 to 49 (MAEGGFDPCECVCSHEHAMRRLINLLRQSQSYCTDTECLQELPGPSSDN) the chain is on the lumenal side. Residues 50 to 70 (GISITMILMAWMVIAVILFLL) form a helical membrane-spanning segment. Residues 71-99 (RPPNLRGSNLTGKPASPHNGQDPPAPPVD) lie on the Cytoplasmic side of the membrane. The tract at residues 78–99 (SNLTGKPASPHNGQDPPAPPVD) is disordered.

The protein resides in the endoplasmic reticulum membrane. The protein is Small integral membrane protein 14 (SMIM14) of Bos taurus (Bovine).